The primary structure comprises 240 residues: Cilia- and flagella-associated protein 77 (240 aa).

The protein belongs to the CFAP77 family.

It is found in the cytoplasm. The protein localises to the cytoskeleton. The protein resides in the cilium axoneme. It localises to the flagellum axoneme. Microtubule inner protein (MIP) part of the dynein-decorated doublet microtubules (DMTs) in cilia axoneme, which is required for motile cilia beating. This Danio rerio (Zebrafish) protein is Cilia- and flagella-associated protein 77.